The following is a 134-amino-acid chain: Cytochrome c-550 (134 aa).

Position 1 is a pyrrolidone carboxylic acid (Gln1). The heme c site is built by Cys15, Cys18, His19, and Met100.

Post-translationally, binds 1 heme c group covalently per subunit.

Electron donor for nitrous-oxide reductase. This is Cytochrome c-550 from Paracoccus pantotrophus (Thiosphaera pantotropha).